The following is an 878-amino-acid chain: Multiple RNA-binding domain-containing protein 1 (878 aa).

Positions Ser-2 to Ser-90 constitute an RRM 1 domain. 3 disordered regions span residues Leu-118–Ile-143, Thr-159–Glu-269, and Gly-287–Leu-323. The segment covering Thr-159–Thr-177 has biased composition (polar residues). Acidic residues predominate over residues Glu-180 to Gly-190. Over residues Gln-295–Gln-304 the composition is skewed to low complexity. Residues Gln-305–Glu-319 are compositionally biased toward acidic residues. 4 RRM domains span residues Gly-330–Ala-408, Arg-516–Ser-588, Val-651–Arg-734, and Gly-752–Gln-829. The disordered stretch occupies residues Ser-732–Gln-751. The segment at Thr-852 to Gly-878 is disordered. The segment covering Leu-867 to Gly-878 has biased composition (acidic residues).

It belongs to the RRM MRD1 family.

The protein resides in the nucleus. Involved in pre-rRNA processing. This is Multiple RNA-binding domain-containing protein 1 (MRD1) from Kluyveromyces lactis (strain ATCC 8585 / CBS 2359 / DSM 70799 / NBRC 1267 / NRRL Y-1140 / WM37) (Yeast).